Consider the following 496-residue polypeptide: Glutamyl-tRNA(Gln) amidotransferase subunit A (496 aa).

Residues Lys-75 and Ser-150 each act as charge relay system in the active site. Catalysis depends on Ser-174, which acts as the Acyl-ester intermediate.

It belongs to the amidase family. GatA subfamily. In terms of assembly, heterotrimer of A, B and C subunits.

It catalyses the reaction L-glutamyl-tRNA(Gln) + L-glutamine + ATP + H2O = L-glutaminyl-tRNA(Gln) + L-glutamate + ADP + phosphate + H(+). Its function is as follows. Allows the formation of correctly charged Gln-tRNA(Gln) through the transamidation of misacylated Glu-tRNA(Gln) in organisms which lack glutaminyl-tRNA synthetase. The reaction takes place in the presence of glutamine and ATP through an activated gamma-phospho-Glu-tRNA(Gln). This Burkholderia vietnamiensis (strain G4 / LMG 22486) (Burkholderia cepacia (strain R1808)) protein is Glutamyl-tRNA(Gln) amidotransferase subunit A.